The chain runs to 291 residues: Beta-lactamase CTX-M-8 (291 aa).

Residues 1 to 30 form the signal peptide; the sequence is MMRHRVKRMMLMTTACISLLLGSAPLYAQA. The Nucleophile; acyl-ester intermediate role is filled by serine 73. A beta-lactam contacts are provided by lysine 76, serine 133, glutamate 169, and serine 240.

Belongs to the class-A beta-lactamase family. Monomer.

It is found in the secreted. The enzyme catalyses a beta-lactam + H2O = a substituted beta-amino acid. Inhibited by the beta-lactamase-blocking agents clavulanic acid, tazobactam and sulbactam; in the DH5alpha strain of E.coli. Functionally, extended-spectrum beta-lactamase (ESBL) which confers resistance to penicillins, as well as first, third and fourth-generation cephalosporins. Has cefotaxime-hydrolyzing activity. Inactive against cephalosporin antibiotic, cefoxitin, and the carbapenem, imipenem. This Citrobacter amalonaticus protein is Beta-lactamase CTX-M-8.